Reading from the N-terminus, the 148-residue chain is uncharacterized protein (148 aa).

This sequence belongs to the SufE family.

This is an uncharacterized protein from Rhizobium etli (strain ATCC 51251 / DSM 11541 / JCM 21823 / NBRC 15573 / CFN 42).